A 158-amino-acid polypeptide reads, in one-letter code: Non-secretory ribonuclease (158 aa).

A signal peptide spans 1-27 (MVPKLFTSQICLLLLLGLLGVEGSLHA). Residue H42 is the Proton acceptor of the active site. 4 disulfide bridges follow: C50/C110, C64/C121, C82/C136, and C89/C98. Position 60 is a 3'-nitrotyrosine (Y60). 65–69 (KNQNT) provides a ligand contact to substrate. 3 N-linked (GlcNAc...) asparagine glycosylation sites follow: N86, N92, and N111. The active-site Proton donor is the H153.

The protein belongs to the pancreatic ribonuclease family. In terms of assembly, interacts with and forms a tight 1:1 complex with RNH1. Dimerization of two such complexes may occur.

The protein resides in the lysosome. It is found in the cytoplasmic granule. It catalyses the reaction an [RNA] containing cytidine + H2O = an [RNA]-3'-cytidine-3'-phosphate + a 5'-hydroxy-ribonucleotide-3'-[RNA].. It carries out the reaction an [RNA] containing uridine + H2O = an [RNA]-3'-uridine-3'-phosphate + a 5'-hydroxy-ribonucleotide-3'-[RNA].. Its function is as follows. This is a non-secretory ribonuclease. It is a pyrimidine specific nuclease with a slight preference for U. Cytotoxin and helminthotoxin. Possesses a wide variety of biological activities. The polypeptide is Non-secretory ribonuclease (RNASE2) (Aotus trivirgatus (Three-striped night monkey)).